The primary structure comprises 248 residues: MKIDVLTLFPEMFQSPFEESIFKRATDNNLVRLEIHNFRDFAHDKHHAVDDSPYGGGAGMLLKPEPLFEAVEDVLREDPTPAPVILLSPQGRSFNQEVARELAKHERLIIICGHYEGFDERVREHLSTDEISIGDFVLTGGELAAMVVIDAVSRLIPGVLGSGESSQDDSHSNGLLEHPHYTRPPVFRGWGIPDVLLSGNHAQINRWRRKESLRRTLKRRPDMFEKIPLSKADRKLVDEILAEENTQG.

S-adenosyl-L-methionine is bound by residues Gly-113 and 133–138 (IGDFVL).

Belongs to the RNA methyltransferase TrmD family. As to quaternary structure, homodimer.

It localises to the cytoplasm. It carries out the reaction guanosine(37) in tRNA + S-adenosyl-L-methionine = N(1)-methylguanosine(37) in tRNA + S-adenosyl-L-homocysteine + H(+). Specifically methylates guanosine-37 in various tRNAs. This Dehalococcoides mccartyi (strain ATCC BAA-2100 / JCM 16839 / KCTC 5957 / BAV1) protein is tRNA (guanine-N(1)-)-methyltransferase.